The primary structure comprises 456 residues: Aromatic amino acid transport protein AroP (456 aa).

Topologically, residues 1-18 (MEGQQHGEQLKRGLKNRH) are cytoplasmic. The chain crosses the membrane as a helical span at residues 19 to 39 (IQLIALGGAIGTGLFLGSASV). Residues 40–41 (IQ) are Periplasmic-facing. Residues 42–62 (SAGPGIILGYAIAGFIAFLIM) traverse the membrane as a helical segment. At 63-85 (RQLGEMVVEEPVAGSFSHFAYKY) the chain is on the cytoplasmic side. A helical transmembrane segment spans residues 86 to 106 (WGSFAGFASGWNYWVLYVLVA). Topologically, residues 107-116 (MAELTAVGKY) are periplasmic. The helical transmembrane segment at 117–137 (IQFWYPEIPTWVSAAVFFVVI) threads the bilayer. Topologically, residues 138 to 154 (NAINLTNVKVFGEMEFW) are cytoplasmic. A helical transmembrane segment spans residues 155-175 (FAIIKVIAVVAMIIFGAWLLF). The Periplasmic segment spans residues 176-200 (SGNGGPQASVSNLWDQGGFLPHGFT). The chain crosses the membrane as a helical span at residues 201–221 (GLVMMMAIIMFSFGGLELVGI). Residues 222–239 (TAAEADNPEQSIPKATNQ) lie on the Cytoplasmic side of the membrane. Residues 240-260 (VIYRILIFYIGSLAVLLSLMP) traverse the membrane as a helical segment. Residues 261-270 (WTRVTADTSP) lie on the Periplasmic side of the membrane. Residues 271-291 (FVLIFHELGDTFVANALNIVV) traverse the membrane as a helical segment. Residues 292–332 (LTAALSVYNSCVYCNSRMLFGLAQQGNAPKALASVDKRGVP) lie on the Cytoplasmic side of the membrane. The chain crosses the membrane as a helical span at residues 333-353 (VNTILVSALVTALCVLINYLA). At 354-357 (PESA) the chain is on the periplasmic side. The chain crosses the membrane as a helical span at residues 358–378 (FGLLMALVVSALVINWAMISL). At 379 to 398 (AHMKFRRAKQEQGVVTRFPA) the chain is on the cytoplasmic side. Residues 399-419 (LLYPLGNWICLLFMAAVLVIM) traverse the membrane as a helical segment. The Periplasmic segment spans residues 420–424 (LMTPG). A helical membrane pass occupies residues 425-445 (MAISVYLIPVWLIVLGIGYLF). Residues 446–456 (KEKTAKAVKAH) are Cytoplasmic-facing.

It belongs to the amino acid-polyamine-organocation (APC) superfamily. Amino acid transporter (AAT) (TC 2.A.3.1) family.

Its subcellular location is the cell inner membrane. It catalyses the reaction L-phenylalanine(in) + H(+)(in) = L-phenylalanine(out) + H(+)(out). It carries out the reaction L-tryptophan(in) + H(+)(in) = L-tryptophan(out) + H(+)(out). The catalysed reaction is L-tyrosine(in) + H(+)(in) = L-tyrosine(out) + H(+)(out). Permease that is involved in the active transport across the cytoplasmic membrane of all three aromatic amino acids, phenylalanine, tyrosine and tryptophan. This Escherichia coli O6:H1 (strain CFT073 / ATCC 700928 / UPEC) protein is Aromatic amino acid transport protein AroP (aroP).